The sequence spans 593 residues: UvrABC system protein C (593 aa).

The GIY-YIG domain maps to 13 to 91 (TTPGVYMMKD…IKEYRPKYNV (79 aa)). One can recognise a UVR domain in the interval 202–237 (DEIVEELKKKMFEYADNLMFEKAQEIKNKITSLEQI).

The protein belongs to the UvrC family. As to quaternary structure, interacts with UvrB in an incision complex.

The protein localises to the cytoplasm. Its function is as follows. The UvrABC repair system catalyzes the recognition and processing of DNA lesions. UvrC both incises the 5' and 3' sides of the lesion. The N-terminal half is responsible for the 3' incision and the C-terminal half is responsible for the 5' incision. The polypeptide is UvrABC system protein C (Caldicellulosiruptor saccharolyticus (strain ATCC 43494 / DSM 8903 / Tp8T 6331)).